Reading from the N-terminus, the 281-residue chain is Fructose-bisphosphate aldolase class 1 (281 aa).

Catalysis depends on Lys191, which acts as the Schiff-base intermediate with dihydroxyacetone-P.

The protein belongs to the DeoC/FbaB aldolase family. Homooctamer.

The protein resides in the cytoplasm. The protein localises to the chromosome. The catalysed reaction is beta-D-fructose 1,6-bisphosphate = D-glyceraldehyde 3-phosphate + dihydroxyacetone phosphate. Activated by citrate. The chain is Fructose-bisphosphate aldolase class 1 (fba) from Thermococcus kodakarensis (strain ATCC BAA-918 / JCM 12380 / KOD1) (Pyrococcus kodakaraensis (strain KOD1)).